The following is a 156-amino-acid chain: tRNA (cytidine(34)-2'-O)-methyltransferase (156 aa).

The S-adenosyl-L-methionine site is built by G102, L124, and S132.

It belongs to the class IV-like SAM-binding methyltransferase superfamily. RNA methyltransferase TrmH family. TrmL subfamily. Homodimer.

The protein localises to the cytoplasm. The enzyme catalyses cytidine(34) in tRNA + S-adenosyl-L-methionine = 2'-O-methylcytidine(34) in tRNA + S-adenosyl-L-homocysteine + H(+). The catalysed reaction is 5-carboxymethylaminomethyluridine(34) in tRNA(Leu) + S-adenosyl-L-methionine = 5-carboxymethylaminomethyl-2'-O-methyluridine(34) in tRNA(Leu) + S-adenosyl-L-homocysteine + H(+). Functionally, methylates the ribose at the nucleotide 34 wobble position in the two leucyl isoacceptors tRNA(Leu)(CmAA) and tRNA(Leu)(cmnm5UmAA). Catalyzes the methyl transfer from S-adenosyl-L-methionine to the 2'-OH of the wobble nucleotide. The sequence is that of tRNA (cytidine(34)-2'-O)-methyltransferase from Burkholderia cenocepacia (strain HI2424).